We begin with the raw amino-acid sequence, 315 residues long: Methionyl-tRNA formyltransferase (315 aa).

112–115 (SLLP) is a (6S)-5,6,7,8-tetrahydrofolate binding site.

Belongs to the Fmt family.

It carries out the reaction L-methionyl-tRNA(fMet) + (6R)-10-formyltetrahydrofolate = N-formyl-L-methionyl-tRNA(fMet) + (6S)-5,6,7,8-tetrahydrofolate + H(+). Functionally, attaches a formyl group to the free amino group of methionyl-tRNA(fMet). The formyl group appears to play a dual role in the initiator identity of N-formylmethionyl-tRNA by promoting its recognition by IF2 and preventing the misappropriation of this tRNA by the elongation apparatus. The chain is Methionyl-tRNA formyltransferase from Leptospira borgpetersenii serovar Hardjo-bovis (strain JB197).